The following is a 1448-amino-acid chain: Probable serine/threonine-protein kinase irlB (1448 aa).

Positions D412–D423 are enriched in acidic residues. The segment at D412–N446 is disordered. Low complexity predominate over residues G428–N437. 3 coiled-coil regions span residues A666–N817, E887–K921, and E974–D1016. The disordered stretch occupies residues N975–L1008. Residues K978–L1008 show a composition bias toward low complexity. The region spanning R1027 to F1293 is the Protein kinase domain. ATP-binding positions include L1033 to L1041 and K1056. The Proton acceptor role is filled by D1151. Residues L1296–N1448 form the KEN domain.

Belongs to the protein kinase superfamily. Ser/Thr protein kinase family.

The catalysed reaction is L-seryl-[protein] + ATP = O-phospho-L-seryl-[protein] + ADP + H(+). It catalyses the reaction L-threonyl-[protein] + ATP = O-phospho-L-threonyl-[protein] + ADP + H(+). The polypeptide is Probable serine/threonine-protein kinase irlB (irlB-1) (Dictyostelium discoideum (Social amoeba)).